The following is a 766-amino-acid chain: Phospholipid phosphatase-related protein type 4 (766 aa).

S37 carries the post-translational modification Phosphoserine. A run of 3 helical transmembrane segments spans residues 68–88, 120–140, and 179–199; these read LPCF…SLYF, AIPF…TIMV, and FVGV…IIQL. Residues N215 and N220 are each glycosylated (N-linked (GlcNAc...) asparagine). Residues 248-268 form a helical membrane-spanning segment; sequence SFPSQHATLAAFAAVYVSMYF. N269 carries N-linked (GlcNAc...) asparagine glycosylation. 2 consecutive transmembrane segments (helical) span residues 277-297 and 309-329; these read KLLK…CGLT and VYCG…YAVG. Position 347 is a phosphoserine (S347). The N-linked (GlcNAc...) asparagine glycan is linked to N363. Position 386 is a phosphoserine (S386). N433 carries N-linked (GlcNAc...) asparagine glycosylation. S439 is subject to Phosphoserine. The segment at 454–494 is disordered; sequence SKNESRKMSLQVMDTEPEGQSPPRSIEMRSSSEPSRVGVNG. An N-linked (GlcNAc...) asparagine glycan is attached at N456. Phosphoserine is present on residues S462 and S474. N-linked (GlcNAc...) asparagine glycosylation is found at N515, N545, and N570. Position 608 is a phosphoserine (S608). Disordered regions lie at residues 634–654, 672–701, and 742–766; these read PIIQ…KWKA, DSES…HHHH, and ERSN…AYKD. The segment covering 672 to 697 has biased composition (basic and acidic residues); it reads DSESCESLKDSFGSGDRKRSNIDSNE. The span at 743–752 shows a compositional bias: polar residues; the sequence is RSNSPENTRN.

The protein belongs to the PA-phosphatase related phosphoesterase family. Post-translationally, O-glycosylated. Probably at Ser-347. Brain-specific, it is exclusively expressed in neurons (at protein level).

Its subcellular location is the postsynaptic density membrane. Postsynaptic density membrane protein that indirectly regulates glutamatergic synaptic transmission through lysophosphatidic acid (LPA)-mediated signaling pathways. Binds lysophosphatidic acid (LPA) and mediates its internalization into cells. Could act as receptor or a transporter of this lipid at the post-synaptic membrane. Modulates lysophosphatidic acid (LPA) activity in neuron axonal outgrowth during development by attenuating phospholipid-induced axon collapse. The chain is Phospholipid phosphatase-related protein type 4 from Mus musculus (Mouse).